Reading from the N-terminus, the 502-residue chain is Cytochrome P450 2J2 (502 aa).

C448 is a binding site for heme.

Belongs to the cytochrome P450 family. It depends on heme as a cofactor. As to expression, highly expressed in heart, present at lower levels in liver, kidney and skeletal muscle (at protein level).

The protein localises to the endoplasmic reticulum membrane. The protein resides in the microsome membrane. It carries out the reaction (5Z,8Z,11Z,14Z)-eicosatetraenoate + reduced [NADPH--hemoprotein reductase] + O2 = 5,6-epoxy-(8Z,11Z,14Z)-eicosatrienoate + oxidized [NADPH--hemoprotein reductase] + H2O + H(+). The catalysed reaction is (5Z,8Z,11Z,14Z)-eicosatetraenoate + reduced [NADPH--hemoprotein reductase] + O2 = (8R,9S)-epoxy-(5Z,11Z,14Z)-eicosatrienoate + oxidized [NADPH--hemoprotein reductase] + H2O + H(+). The enzyme catalyses (5Z,8Z,11Z,14Z)-eicosatetraenoate + reduced [NADPH--hemoprotein reductase] + O2 = (8S,9R)-epoxy-(5Z,11Z,14Z)-eicosatrienoate + oxidized [NADPH--hemoprotein reductase] + H2O + H(+). It catalyses the reaction (5Z,8Z,11Z,14Z)-eicosatetraenoate + reduced [NADPH--hemoprotein reductase] + O2 = (11R,12S)-epoxy-(5Z,8Z,14Z)-eicosatrienoate + oxidized [NADPH--hemoprotein reductase] + H2O + H(+). It carries out the reaction (5Z,8Z,11Z,14Z)-eicosatetraenoate + reduced [NADPH--hemoprotein reductase] + O2 = (11S,12R)-epoxy-(5Z,8Z,14Z)-eicosatrienoate + oxidized [NADPH--hemoprotein reductase] + H2O + H(+). The catalysed reaction is (5Z,8Z,11Z,14Z)-eicosatetraenoate + reduced [NADPH--hemoprotein reductase] + O2 = (14R,15S)-epoxy-(5Z,8Z,11Z)-eicosatrienoate + oxidized [NADPH--hemoprotein reductase] + H2O + H(+). The enzyme catalyses (5Z,8Z,11Z,14Z)-eicosatetraenoate + reduced [NADPH--hemoprotein reductase] + O2 = (14S,15R)-epoxy-(5Z,8Z,11Z)-eicosatrienoate + oxidized [NADPH--hemoprotein reductase] + H2O + H(+). It catalyses the reaction (15S)-hydroperoxy-(5Z,8Z,11Z,13E)-eicosatetraenoate = (13S)-hydroxy-(14S,15S)-epoxy-(5Z,8Z,11Z)-eicosatrienoate. It carries out the reaction (15S)-hydroperoxy-(5Z,8Z,11Z,13E)-eicosatetraenoate = (13R)-hydroxy-(14S,15S)-epoxy-(5Z,8Z,11Z)-eicosatrienoate. The catalysed reaction is (5Z,8Z,11Z,14Z,17Z)-eicosapentaenoate + reduced [NADPH--hemoprotein reductase] + O2 = (17R,18S)-epoxy-(5Z,8Z,11Z,14Z)-eicosatetraenoate + oxidized [NADPH--hemoprotein reductase] + H2O + H(+). The enzyme catalyses (5Z,8Z,11Z,14Z,17Z)-eicosapentaenoate + reduced [NADPH--hemoprotein reductase] + O2 = (17S,18R)-epoxy-(5Z,8Z,11Z,14Z)-eicosatetraenoate + oxidized [NADPH--hemoprotein reductase] + H2O + H(+). It catalyses the reaction (4Z,7Z,10Z,13Z,16Z,19Z)-docosahexaenoate + reduced [NADPH--hemoprotein reductase] + O2 = (19R,20S)-epoxy-(4Z,7Z,10Z,13Z,16Z)-docosapentaenoate + oxidized [NADPH--hemoprotein reductase] + H2O + H(+). It carries out the reaction (4Z,7Z,10Z,13Z,16Z,19Z)-docosahexaenoate + reduced [NADPH--hemoprotein reductase] + O2 = (19S,20R)-epoxy-(4Z,7Z,10Z,13Z,16Z)-docosapentaenoate + oxidized [NADPH--hemoprotein reductase] + H2O + H(+). The catalysed reaction is albendazole + reduced [NADPH--hemoprotein reductase] + O2 = hydroxyalbendazole + oxidized [NADPH--hemoprotein reductase] + H2O + H(+). The enzyme catalyses albendazole + reduced [NADPH--hemoprotein reductase] + O2 = albendazole S-oxide + oxidized [NADPH--hemoprotein reductase] + H2O + H(+). It catalyses the reaction fenbendazole + reduced [NADPH--hemoprotein reductase] + O2 = fenbendazole S-oxide + oxidized [NADPH--hemoprotein reductase] + H2O + H(+). The protein operates within lipid metabolism; arachidonate metabolism. A cytochrome P450 monooxygenase involved in the metabolism of polyunsaturated fatty acids (PUFA) in the cardiovascular system. Mechanistically, uses molecular oxygen inserting one oxygen atom into a substrate, and reducing the second into a water molecule, with two electrons provided by NADPH via cytochrome P450 reductase (NADPH--hemoprotein reductase). Catalyzes the epoxidation of double bonds of PUFA. Converts arachidonic acid to four regioisomeric epoxyeicosatrienoic acids (EpETrE), likely playing a major role in the epoxidation of endogenous cardiac arachidonic acid pools. In endothelial cells, participates in eicosanoids metabolism by converting hydroperoxide species into hydroxy epoxy metabolites. In combination with 15-lipoxygenase metabolizes arachidonic acid and converts hydroperoxyicosatetraenoates (HpETEs) into hydroxy epoxy eicosatrienoates (HEETs), which are precursors of vasodilatory trihydroxyicosatrienoic acids (THETAs). This hydroperoxide isomerase activity is NADPH- and O2-independent. Catalyzes the monooxygenation of a various xenobiotics, such as danazol, amiodarone, terfenadine, astemizole, thioridazine, tamoxifen, cyclosporin A and nabumetone. Catalyzes hydroxylation of the anthelmintics albendazole and fenbendazole. Catalyzes the sulfoxidation of fenbedazole. The polypeptide is Cytochrome P450 2J2 (Homo sapiens (Human)).